The sequence spans 1368 residues: DNA-directed RNA polymerase subunit beta (1368 aa).

The protein belongs to the RNA polymerase beta chain family. In terms of assembly, the RNAP catalytic core consists of 2 alpha, 1 beta, 1 beta' and 1 omega subunit. When a sigma factor is associated with the core the holoenzyme is formed, which can initiate transcription.

The enzyme catalyses RNA(n) + a ribonucleoside 5'-triphosphate = RNA(n+1) + diphosphate. Its function is as follows. DNA-dependent RNA polymerase catalyzes the transcription of DNA into RNA using the four ribonucleoside triphosphates as substrates. The polypeptide is DNA-directed RNA polymerase subunit beta (Ralstonia pickettii (strain 12J)).